The following is a 490-amino-acid chain: Cytochrome P450 2W1 (490 aa).

Residues methionine 1–alanine 22 form the signal peptide. Asparagine 177 carries N-linked (GlcNAc...) asparagine glycosylation. Cysteine 433 provides a ligand contact to heme.

This sequence belongs to the cytochrome P450 family. Heme is required as a cofactor. As to expression, very low levels are detected in fetal and adult tissues. Highly expressed in several tumor samples, in particular colon and adrenal tumors.

Its subcellular location is the endoplasmic reticulum lumen. It localises to the cell membrane. It is found in the microsome membrane. It catalyses the reaction all-trans-retinoate + reduced [NADPH--hemoprotein reductase] + O2 = all-trans-4-hydroxyretinoate + oxidized [NADPH--hemoprotein reductase] + H2O + H(+). The enzyme catalyses 1-(9Z-octadecenoyl)-sn-glycero-3-phosphocholine + reduced [NADPH--hemoprotein reductase] + O2 = 1-[8-hydroxy-(9Z)-octadecenoyl]-sn-glycero-3-phosphocholine + oxidized [NADPH--hemoprotein reductase] + H2O + H(+). The catalysed reaction is 1-(9Z-octadecenoyl)-sn-glycero-3-phosphocholine + reduced [NADPH--hemoprotein reductase] + O2 = 1-[11-hydroxy-(9Z)-octadecenoyl]-sn-glycero-3-phosphocholine + oxidized [NADPH--hemoprotein reductase] + H2O + H(+). It carries out the reaction 1-(9Z-octadecenoyl)-sn-glycero-3-phosphocholine + reduced [NADPH--hemoprotein reductase] + O2 = 1-[(9S,10R)-epoxy-octadecanoyl]-sn-glycero-3-phosphocholine + oxidized [NADPH--hemoprotein reductase] + H2O + H(+). It catalyses the reaction 1-(9Z-octadecenoyl)-sn-glycero-3-phosphocholine + reduced [NADPH--hemoprotein reductase] + O2 = 1-[(9R,10S)-epoxy-octadecanoyl]-sn-glycero-3-phosphocholine + oxidized [NADPH--hemoprotein reductase] + H2O + H(+). A cytochrome P450 monooxygenase that may play a role in retinoid and phospholipid metabolism. Catalyzes the hydroxylation of saturated carbon hydrogen bonds. Hydroxylates all trans-retinoic acid (atRA) to 4-hydroxyretinoate and may regulate atRA clearance. Other retinoids such as all-trans retinol and all-trans retinal are potential endogenous substrates. Catalyzes both epoxidation of double bonds and hydroxylation of carbon hydrogen bonds of the fatty acyl chain of 1-acylphospholipids/2-lysophospholipids. Can metabolize various lysophospholipids classes including lysophosphatidylcholines (LPCs), lysophosphatidylinositols (LPIs), lysophosphatidylserines (LPSs), lysophosphatidylglycerols (LPGs), lysophosphatidylethanolamines (LPEs) and lysophosphatidic acids (LPAs). Has low or no activity toward 2-acylphospholipids/1-lysophospholipids, diacylphospholipids and free fatty acids. May play a role in tumorigenesis by activating procarcinogens such as aflatoxin B1, polycyclic aromatic hydrocarbon dihydrodiols and aromatic amines. Mechanistically, uses molecular oxygen inserting one oxygen atom into a substrate, and reducing the second into a water molecule, with two electrons provided by NADPH via cytochrome P450 reductase (CPR; NADPH-ferrihemoprotein reductase). In Homo sapiens (Human), this protein is Cytochrome P450 2W1.